Here is a 596-residue protein sequence, read N- to C-terminus: MDQRRGNELDEFEKLLGEIPKVTSGNDYNHFPICLSSSRSQSIKKVDQYLPDDRAFTTSFSEANLHFGIPNHTPESPHPLFINPSYHSPSNSPCVYDKFDSRKLDPVMFRKLQQVGYLPNLSSGISPAQRQHYLPHSQPLSHYQSPMTWRDIEEENFQRLKLQEEQYLSINPHFLHLQSMDTVPRQDHFDYRRAEQSNRNLFWNGEDGNESVRKMCYPEKILMRSQMDLNTAKVIKYGAGDESQNGRLWLQNQLNEDLTMSLNNLSLQPQKYNSIAEARGKIYYLAKDQHGCRFLQRIFSEKDGNDIEMIFNEIIDYISELMMDPFGNYLVQKLLEVCNEDQRMQIVHSITRKPGLLIKISCDMHGTRAVQKIVETAKREEEISIIISALKHGIVHLIKNVNGNHVVQRCLQYLLPYCGKFLFEAAITHCVELATDRHGCCVLQKCLGYSEGEQKQHLVSEIASNALLLSQDPFGNYVLQYVFELQLQWATFEILEQLEGNYTELSMQKCSSNVVEKCLKLADDKHRARIIRELINYGRLDQVMLDPYGNYVIQAALKQSKGNVHALLVDAIKLNISSLRTNPYGKKVLSALSSKK.

The region spanning 254–596 is the PUM-HD domain; the sequence is LNEDLTMSLN…KVLSALSSKK (343 aa). 8 Pumilio repeats span residues 277–312, 313–348, 349–388, 389–424, 425–460, 461–496, 497–532, and 533–570; these read EARG…MIFN, EIID…QIVH, SITR…IIIS, ALKH…FLFE, AAIT…HLVS, EIAS…EILE, QLEG…RIIR, and ELIN…LLVD.

The protein resides in the cytoplasm. Its subcellular location is the nucleus. Its function is as follows. Sequence-specific RNA-binding protein that regulates translation and mRNA stability by binding the 3'-UTR of target mRNAs. The chain is Pumilio homolog 12 (APUM12) from Arabidopsis thaliana (Mouse-ear cress).